The primary structure comprises 663 residues: GPI mannosyltransferase 3 (663 aa).

The segment covering 1 to 11 (MPMSARSRRSN) has biased composition (basic residues). The interval 1 to 44 (MPMSARSRRSNPRLPPSPSSSSSSDAVRASPHSSPPSRLRPPSA) is disordered. Positions 19–42 (SSSSSSDAVRASPHSSPPSRLRPP) are enriched in low complexity. Helical transmembrane passes span 47–67 (DVSS…ALTV), 110–130 (PLIF…LGLT), 137–157 (LLIA…DFYT), 226–246 (VLAV…FPPL), 269–289 (YASQ…LVGL), 304–324 (GSIL…LSVI), 335–355 (LLPA…IPAL), and 367–387 (LTLI…TLFH). Positions 492–512 (HIPRRPSYATPPSSQRQPTQL) are disordered. Over residues 501–511 (TPPSSQRQPTQ) the composition is skewed to polar residues.

Belongs to the glycosyltransferase 22 family. PIGB subfamily.

It is found in the endoplasmic reticulum membrane. Its pathway is glycolipid biosynthesis; glycosylphosphatidylinositol-anchor biosynthesis. Mannosyltransferase involved in glycosylphosphatidylinositol-anchor biosynthesis. Transfers the third mannose to Man2-GlcN-acyl-PI during GPI precursor assembly. In Emericella nidulans (strain FGSC A4 / ATCC 38163 / CBS 112.46 / NRRL 194 / M139) (Aspergillus nidulans), this protein is GPI mannosyltransferase 3 (gpi10).